A 582-amino-acid chain; its full sequence is Pre-hexon-linking protein IIIa (582 aa).

The segment at 1–114 (MQRPAIIAER…ALLERVARYN (114 aa)) is peripentonal hexon-tethering domain. The segment at 146–259 (GSLVALNAFL…FTNTNSLSRD (114 aa)) is binding to hexon-linking protein. The residue at position 233 (Ser-233) is a Phosphoserine; by host. Thr-282 carries the phosphothreonine; by host modification. Positions 437-479 (GKKEAGDEGPLLDSRASSPFPSLTSLPASVNSGRTTRPRLTGE) are disordered. Residues 451–471 (RASSPFPSLTSLPASVNSGRT) show a composition bias toward polar residues. Phosphoserine; by host is present on residues Ser-458 and Ser-465. Residue Tyr-482 is modified to Phosphotyrosine; by host. Ser-503 bears the Phosphoserine; by host mark. Basic and acidic residues predominate over residues 517–526 (ERREWEERQP). Residues 517 to 582 (ERREWEERQP…RPQGCIGSLY (66 aa)) are disordered. The span at 530 to 543 (RPPRQRWQRRKKGA) shows a compositional bias: basic residues. A propeptide spanning residues 566 to 582 (GNPFAHLRPQGCIGSLY) is cleaved from the precursor.

Belongs to the adenoviridae hexon-linking protein IIIa family. In terms of assembly, interacts with hexon proteins; this interaction tethers the peripentonal hexons to hexons situated in the facet. Interacts with the penton protein (via N-terminus). Interacts with packaging protein 3; this interaction is required to promote correct genome packaging. Post-translationally, cleaved near the C-terminus by the viral protease during virion maturation to form the mature protein.

The protein resides in the virion. Its subcellular location is the host nucleus. In terms of biological role, structural component of the virion that acts as a cement protein on the capsid exterior which mediates the interactions between the hexons, including the peripentonal hexons, and reaches all the way to the penton vertices. Two hexon linking proteins IIIa, one from each facet, stabilize the unique edge interface between a pair of facets. As the virus enters the host cell, hexon linking proteins IIIa are shed concomitant with virion acidification in the endosome. During virus assembly, seems to play a role in the serotype specificity of the packaging of viral DNA via its interaction with packaging protein 3. The protein is Pre-hexon-linking protein IIIa of Human adenovirus A serotype 12 (HAdV-12).